Consider the following 83-residue polypeptide: Arminin 3b (83 aa).

An N-terminal signal peptide occupies residues 1 to 18 (MKIVFAILFLTFIALTYA). Positions 19–57 (RSFEDLKEEIKNEIEKEIFDDLEEESDELDNNVKKFNDA) are excised as a propeptide. S80 bears the Serine amide mark.

The protein belongs to the arminin family. As to expression, expressed in entodermal epithelium along the body column.

The protein localises to the secreted. Its subcellular location is the target cell membrane. In terms of biological role, antimicrobial peptide with a broad-spectrum antimicrobial activity. Keeps its antibacterial activity under a wide range of salt concentrations that mimic physiological conditions of human blood, which is surprising, since Hydra is an obligate freshwater animal with nearly no salt tolerance. Does not affect red blood cells. The sequence is that of Arminin 3b from Hydra vulgaris (Hydra).